The sequence spans 1801 residues: Focadhesin (1801 aa).

Residue Lys819 is modified to N6-acetyllysine.

As to quaternary structure, interacts with VCL. In terms of tissue distribution, ubiquitous. High expression in brain followed by testis, muscle, pancreas, heart, ovary, small intestine, placenta, prostate, thymus, kidney, colon, liver, lung, spleen and leukocytes. Expression is reduced in most glioblastomas and all glioblastoma cell lines.

The protein resides in the cell junction. The protein localises to the focal adhesion. It localises to the cytoplasm. It is found in the cytosol. Its function is as follows. Required for the maintenance of SKIC2 and SKIC3 proteostatic levels in the liver. May be involved in the regulation of RNA degradation by the exosome complex. Potential tumor suppressor in gliomas. This chain is Focadhesin, found in Homo sapiens (Human).